A 367-amino-acid chain; its full sequence is Outer membrane protein P2 (367 aa).

A signal peptide spans 1-20; sequence MKKTLAALIVGAFAASAANA.

This sequence belongs to the Gram-negative porin family. As to quaternary structure, homotrimer.

The protein localises to the cell outer membrane. Forms pores that allow passive diffusion of small molecules across the outer membrane. This is Outer membrane protein P2 (ompP2) from Haemophilus influenzae.